A 534-amino-acid chain; its full sequence is Glucan endo-1,3-beta-glucosidase 12 (534 aa).

A signal peptide spans 1-24 (MGQRLNLVFWIFVSILAFLNFGMA). Catalysis depends on Glu-120, which acts as the Proton donor. N-linked (GlcNAc...) asparagine glycosylation occurs at Asn-127. The active-site Nucleophile is the Glu-264. 3 N-linked (GlcNAc...) asparagine glycosylation sites follow: Asn-336, Asn-357, and Asn-375. Positions 348–379 (ENTTPVSPTNSTTGTSPSPSSSPIINGNSTVT) are disordered. Over residues 349–377 (NTTPVSPTNSTTGTSPSPSSSPIINGNST) the composition is skewed to low complexity. Cys-392 and Cys-455 form a disulfide bridge. 3 N-linked (GlcNAc...) asparagine glycosylation sites follow: Asn-485, Asn-491, and Asn-495. A lipid anchor (GPI-anchor amidated serine) is attached at Ser-507. Residues 508-534 (STNEAFRQMVVAVSVLLPCFVVCSSIW) constitute a propeptide, removed in mature form.

The protein belongs to the glycosyl hydrolase 17 family. Post-translationally, contains two additional disulfide bonds.

Its subcellular location is the secreted. It localises to the cell wall. The protein resides in the cell membrane. The catalysed reaction is Hydrolysis of (1-&gt;3)-beta-D-glucosidic linkages in (1-&gt;3)-beta-D-glucans.. This chain is Glucan endo-1,3-beta-glucosidase 12, found in Arabidopsis thaliana (Mouse-ear cress).